Consider the following 180-residue polypeptide: MSSLTDTEKKMAAALEFFHKEVRSFRTGKANPALVETVTVDVYGTTMRLSDLASISVADTRQLVISPYDANNVSAISKGIIAANLNLQPDVEGTIVRIKVPEPTAEYRNEVIKQLRRKSEEAKVAIRNIRRESNDKLKKDSDLTEDAVKGMEKKVQELTDKFCKQIDEITKQKEAELSSI.

The protein belongs to the RRF family.

It is found in the cytoplasm. In terms of biological role, responsible for the release of ribosomes from messenger RNA at the termination of protein biosynthesis. May increase the efficiency of translation by recycling ribosomes from one round of translation to another. The sequence is that of Ribosome-recycling factor from Chlamydia caviae (strain ATCC VR-813 / DSM 19441 / 03DC25 / GPIC) (Chlamydophila caviae).